A 504-amino-acid polypeptide reads, in one-letter code: L-carnitine/gamma-butyrobetaine antiporter (504 aa).

The next 12 membrane-spanning stretches (helical) occupy residues 10–30, 51–71, 92–112, 143–163, 195–215, 231–251, 263–283, 316–336, 347–367, 398–418, 446–466, and 475–495; these read IEPKVFFPPLIIVGILCWLTV, WGWAFEWYMVVMLFGWFWLVF, IFMMFASCTSAAVLFWGSIEI, GPLPWATYSFLSVAFAYFFFV, FYLVALIFAMGTSLGLATPLV, LDAIIITCWIILNAICVACGL, SYLSFLMLGWVFIVSGASFIM, WTVFYWAWWVIYAIQMSIFLA, LCFGMVMGLTASTWILWTVLG, WAALPLSTATMWGFFILCFIA, LLVRIGWSILVGIIGIVLLAL, and AIIAGGCPLFFVNIMVTLSFI.

The protein belongs to the BCCT transporter (TC 2.A.15) family. CaiT subfamily. Homotrimer.

Its subcellular location is the cell inner membrane. It catalyses the reaction 4-(trimethylamino)butanoate(in) + (R)-carnitine(out) = 4-(trimethylamino)butanoate(out) + (R)-carnitine(in). Its pathway is amine and polyamine metabolism; carnitine metabolism. In terms of biological role, catalyzes the exchange of L-carnitine for gamma-butyrobetaine. The protein is L-carnitine/gamma-butyrobetaine antiporter of Escherichia coli O157:H7.